Reading from the N-terminus, the 322-residue chain is Beta-ketoacyl-[acyl-carrier-protein] synthase III (322 aa).

Active-site residues include C113 and H249. The tract at residues 250-254 (QANLR) is ACP-binding. N279 is an active-site residue.

It belongs to the thiolase-like superfamily. FabH family. As to quaternary structure, homodimer.

Its subcellular location is the cytoplasm. The enzyme catalyses malonyl-[ACP] + acetyl-CoA + H(+) = 3-oxobutanoyl-[ACP] + CO2 + CoA. It functions in the pathway lipid metabolism; fatty acid biosynthesis. Functionally, catalyzes the condensation reaction of fatty acid synthesis by the addition to an acyl acceptor of two carbons from malonyl-ACP. Catalyzes the first condensation reaction which initiates fatty acid synthesis and may therefore play a role in governing the total rate of fatty acid production. Possesses both acetoacetyl-ACP synthase and acetyl transacylase activities. Its substrate specificity determines the biosynthesis of branched-chain and/or straight-chain of fatty acids. This chain is Beta-ketoacyl-[acyl-carrier-protein] synthase III, found in Granulibacter bethesdensis (strain ATCC BAA-1260 / CGDNIH1).